Reading from the N-terminus, the 460-residue chain is Bifunctional protein GlmU (460 aa).

The tract at residues 1–229 is pyrophosphorylase; the sequence is MTNYAIILAA…FNESLGVNDR (229 aa). Residues 8-11, lysine 22, glutamine 72, and 77-78 contribute to the UDP-N-acetyl-alpha-D-glucosamine site; these read LAAG and GT. Aspartate 102 lines the Mg(2+) pocket. UDP-N-acetyl-alpha-D-glucosamine-binding residues include glycine 139, glutamate 154, asparagine 169, and asparagine 227. Asparagine 227 serves as a coordination point for Mg(2+). The tract at residues 230-250 is linker; that stretch reads VALATAETVMRQRITQKHMVN. The segment at 251-460 is N-acetyltransferase; sequence GVTFQNPETV…RLAHHPSRSK (210 aa). Positions 332 and 350 each coordinate UDP-N-acetyl-alpha-D-glucosamine. Catalysis depends on histidine 362, which acts as the Proton acceptor. UDP-N-acetyl-alpha-D-glucosamine is bound by residues tyrosine 365 and asparagine 376. Residues alanine 379, 385-386, serine 404, alanine 422, and arginine 439 contribute to the acetyl-CoA site; that span reads NY.

This sequence in the N-terminal section; belongs to the N-acetylglucosamine-1-phosphate uridyltransferase family. It in the C-terminal section; belongs to the transferase hexapeptide repeat family. Homotrimer. The cofactor is Mg(2+).

Its subcellular location is the cytoplasm. The catalysed reaction is alpha-D-glucosamine 1-phosphate + acetyl-CoA = N-acetyl-alpha-D-glucosamine 1-phosphate + CoA + H(+). The enzyme catalyses N-acetyl-alpha-D-glucosamine 1-phosphate + UTP + H(+) = UDP-N-acetyl-alpha-D-glucosamine + diphosphate. It participates in nucleotide-sugar biosynthesis; UDP-N-acetyl-alpha-D-glucosamine biosynthesis; N-acetyl-alpha-D-glucosamine 1-phosphate from alpha-D-glucosamine 6-phosphate (route II): step 2/2. Its pathway is nucleotide-sugar biosynthesis; UDP-N-acetyl-alpha-D-glucosamine biosynthesis; UDP-N-acetyl-alpha-D-glucosamine from N-acetyl-alpha-D-glucosamine 1-phosphate: step 1/1. The protein operates within bacterial outer membrane biogenesis; LPS lipid A biosynthesis. Its function is as follows. Catalyzes the last two sequential reactions in the de novo biosynthetic pathway for UDP-N-acetylglucosamine (UDP-GlcNAc). The C-terminal domain catalyzes the transfer of acetyl group from acetyl coenzyme A to glucosamine-1-phosphate (GlcN-1-P) to produce N-acetylglucosamine-1-phosphate (GlcNAc-1-P), which is converted into UDP-GlcNAc by the transfer of uridine 5-monophosphate (from uridine 5-triphosphate), a reaction catalyzed by the N-terminal domain. The polypeptide is Bifunctional protein GlmU (Streptococcus pyogenes serotype M18 (strain MGAS8232)).